Consider the following 447-residue polypeptide: N-succinylarginine dihydrolase (447 aa).

Substrate contacts are provided by residues 19 to 28 (AGLSFGNEAS), Asn110, and 137 to 138 (HR). Residue Glu174 is part of the active site. Arg212 contributes to the substrate binding site. His248 is a catalytic residue. The substrate site is built by Asp250 and Asn359. The Nucleophile role is filled by Cys365.

Belongs to the succinylarginine dihydrolase family. In terms of assembly, homodimer.

It carries out the reaction N(2)-succinyl-L-arginine + 2 H2O + 2 H(+) = N(2)-succinyl-L-ornithine + 2 NH4(+) + CO2. It functions in the pathway amino-acid degradation; L-arginine degradation via AST pathway; L-glutamate and succinate from L-arginine: step 2/5. Its function is as follows. Catalyzes the hydrolysis of N(2)-succinylarginine into N(2)-succinylornithine, ammonia and CO(2). The chain is N-succinylarginine dihydrolase from Escherichia coli O139:H28 (strain E24377A / ETEC).